The following is a 206-amino-acid chain: Ribosomal RNA small subunit methyltransferase G (206 aa).

Residues G74, L79, 125 to 126 (VE), and R140 each bind S-adenosyl-L-methionine.

The protein belongs to the methyltransferase superfamily. RNA methyltransferase RsmG family.

The protein localises to the cytoplasm. The catalysed reaction is guanosine(527) in 16S rRNA + S-adenosyl-L-methionine = N(7)-methylguanosine(527) in 16S rRNA + S-adenosyl-L-homocysteine. Its function is as follows. Specifically methylates the N7 position of guanine in position 527 of 16S rRNA. This chain is Ribosomal RNA small subunit methyltransferase G, found in Shewanella sp. (strain MR-4).